The primary structure comprises 452 residues: Bifunctional protein GlmU (452 aa).

Residues 1 to 226 are pyrophosphorylase; the sequence is MSLTTVILAA…PMEVEGANNR (226 aa). UDP-N-acetyl-alpha-D-glucosamine contacts are provided by residues 8 to 11, Lys-22, Gln-73, 78 to 79, 100 to 102, Gly-137, Glu-151, Asn-166, and Asn-224; these read LAAG, GT, and YGD. Asp-102 is a binding site for Mg(2+). Asn-224 provides a ligand contact to Mg(2+). The tract at residues 227–247 is linker; the sequence is IQLAGLERAYQAWQAQELMLN. The N-acetyltransferase stretch occupies residues 248 to 452; the sequence is GATLADPARI…LDGWKRPVKK (205 aa). Residues Arg-330 and Lys-348 each contribute to the UDP-N-acetyl-alpha-D-glucosamine site. The Proton acceptor role is filled by His-360. UDP-N-acetyl-alpha-D-glucosamine contacts are provided by Tyr-363 and Asn-374. Acetyl-CoA is bound by residues Ala-377, 383-384, Ser-402, Ala-420, and Arg-437; that span reads NY.

In the N-terminal section; belongs to the N-acetylglucosamine-1-phosphate uridyltransferase family. This sequence in the C-terminal section; belongs to the transferase hexapeptide repeat family. As to quaternary structure, homotrimer. Requires Mg(2+) as cofactor.

It is found in the cytoplasm. The catalysed reaction is alpha-D-glucosamine 1-phosphate + acetyl-CoA = N-acetyl-alpha-D-glucosamine 1-phosphate + CoA + H(+). It catalyses the reaction N-acetyl-alpha-D-glucosamine 1-phosphate + UTP + H(+) = UDP-N-acetyl-alpha-D-glucosamine + diphosphate. It functions in the pathway nucleotide-sugar biosynthesis; UDP-N-acetyl-alpha-D-glucosamine biosynthesis; N-acetyl-alpha-D-glucosamine 1-phosphate from alpha-D-glucosamine 6-phosphate (route II): step 2/2. The protein operates within nucleotide-sugar biosynthesis; UDP-N-acetyl-alpha-D-glucosamine biosynthesis; UDP-N-acetyl-alpha-D-glucosamine from N-acetyl-alpha-D-glucosamine 1-phosphate: step 1/1. It participates in bacterial outer membrane biogenesis; LPS lipid A biosynthesis. Its function is as follows. Catalyzes the last two sequential reactions in the de novo biosynthetic pathway for UDP-N-acetylglucosamine (UDP-GlcNAc). The C-terminal domain catalyzes the transfer of acetyl group from acetyl coenzyme A to glucosamine-1-phosphate (GlcN-1-P) to produce N-acetylglucosamine-1-phosphate (GlcNAc-1-P), which is converted into UDP-GlcNAc by the transfer of uridine 5-monophosphate (from uridine 5-triphosphate), a reaction catalyzed by the N-terminal domain. This is Bifunctional protein GlmU from Pseudoalteromonas translucida (strain TAC 125).